A 161-amino-acid polypeptide reads, in one-letter code: Endoribonuclease YbeY (161 aa).

Zn(2+) is bound by residues H120, H124, and H130.

Belongs to the endoribonuclease YbeY family. The cofactor is Zn(2+).

The protein resides in the cytoplasm. Single strand-specific metallo-endoribonuclease involved in late-stage 70S ribosome quality control and in maturation of the 3' terminus of the 16S rRNA. The protein is Endoribonuclease YbeY of Erythrobacter litoralis (strain HTCC2594).